Here is a 321-residue protein sequence, read N- to C-terminus: Fimbria adhesin protein (321 aa).

An N-terminal signal peptide occupies residues 1–18 (MKKLTLFIGLMALGTTSA).

It belongs to the fimbrial protein family.

It localises to the fimbrium. The polypeptide is Fimbria adhesin protein (mrkD) (Klebsiella pneumoniae).